We begin with the raw amino-acid sequence, 250 residues long: Tripartite motif-containing protein 74 (250 aa).

An RING-type zinc finger spans residues 16–57 (CPICLEVFKESLMLQCGHSYCKGCLVSLSYHLDTKVRCPMCW). The B box-type zinc finger occupies 84–125 (PEPKVCVHHRNPLSLFCEKDQELICGLCGLLGSHQHHPVTPV). Zn(2+) contacts are provided by C89, H92, C111, and H117. Coiled coils occupy residues 125–169 (VSTV…NESD) and 204–235 (LVAS…FGNE).

The protein belongs to the TRIM/RBCC family.

The polypeptide is Tripartite motif-containing protein 74 (TRIM74) (Homo sapiens (Human)).